We begin with the raw amino-acid sequence, 255 residues long: Leucyl/phenylalanyl-tRNA--protein transferase (255 aa).

It belongs to the L/F-transferase family.

It is found in the cytoplasm. It carries out the reaction N-terminal L-lysyl-[protein] + L-leucyl-tRNA(Leu) = N-terminal L-leucyl-L-lysyl-[protein] + tRNA(Leu) + H(+). The enzyme catalyses N-terminal L-arginyl-[protein] + L-leucyl-tRNA(Leu) = N-terminal L-leucyl-L-arginyl-[protein] + tRNA(Leu) + H(+). It catalyses the reaction L-phenylalanyl-tRNA(Phe) + an N-terminal L-alpha-aminoacyl-[protein] = an N-terminal L-phenylalanyl-L-alpha-aminoacyl-[protein] + tRNA(Phe). Functions in the N-end rule pathway of protein degradation where it conjugates Leu, Phe and, less efficiently, Met from aminoacyl-tRNAs to the N-termini of proteins containing an N-terminal arginine or lysine. This is Leucyl/phenylalanyl-tRNA--protein transferase from Burkholderia pseudomallei (strain 1106a).